The sequence spans 276 residues: 2-dehydro-3-deoxyphosphooctonate aldolase (276 aa).

This sequence belongs to the KdsA family.

The protein resides in the cytoplasm. It catalyses the reaction D-arabinose 5-phosphate + phosphoenolpyruvate + H2O = 3-deoxy-alpha-D-manno-2-octulosonate-8-phosphate + phosphate. Its pathway is carbohydrate biosynthesis; 3-deoxy-D-manno-octulosonate biosynthesis; 3-deoxy-D-manno-octulosonate from D-ribulose 5-phosphate: step 2/3. It participates in bacterial outer membrane biogenesis; lipopolysaccharide biosynthesis. The chain is 2-dehydro-3-deoxyphosphooctonate aldolase from Helicobacter pylori (strain HPAG1).